Consider the following 815-residue polypeptide: Echinoderm microtubule-associated protein-like 1 (815 aa).

Residues 31-72 (SMEVTDRIASLEQRVQMQEDDIQLLKSALADVVRRLNITEEQ) are a coiled coil. The interval 77 to 179 (NRKGPTKARP…NSESKPKEPV (103 aa)) is disordered. Positions 92–101 (PLRTTVNNGT) are enriched in polar residues. Serine 113 bears the Phosphoserine mark. Residues 126 to 138 (TKSNIKRTSSSER) are compositionally biased toward polar residues. The segment covering 143–153 (GRRESNGDSRG) has biased composition (basic and acidic residues). The segment covering 156–168 (NRTGSTSSSSSGK) has biased composition (low complexity). Positions 176–815 (KEPVFSAEEG…DTSIMQWRVI (640 aa)) are tandem atypical propeller in EMLs. WD repeat units follow at residues 261 to 310 (EQLQ…IWDS), 315 to 358 (TLHV…VWDW), 363 to 400 (KLAD…FWTL), 409 to 446 (QGLF…VWGK), 450 to 489 (RISY…SWSG), 493 to 530 (KLRK…LQGT), 535 to 572 (FTPI…LWDA), 578 to 613 (VWDK…VFDT), 617 to 655 (DLVT…IYGV), 664 to 701 (RVGK…YWVP), 709 to 768 (SVET…LFSY), and 775 to 814 (APSH…QWRV).

It belongs to the WD repeat EMAP family. As to quaternary structure, homotrimer; self-association is mediated by the N-terminal coiled coil. Does not interact with EML3. Binds repolymerizing microtubules. Binds unpolymerized tubulins via its WD repeat region. Interacts with TASOR. Ubiquitous; expressed in most tissues with the exception of thymus and peripheral blood lymphocytes.

The protein localises to the cytoplasm. It is found in the perinuclear region. It localises to the cytoskeleton. Its function is as follows. Modulates the assembly and organization of the microtubule cytoskeleton, and probably plays a role in regulating the orientation of the mitotic spindle and the orientation of the plane of cell division. Required for normal proliferation of neuronal progenitor cells in the developing brain and for normal brain development. Does not affect neuron migration per se. The sequence is that of Echinoderm microtubule-associated protein-like 1 (EML1) from Homo sapiens (Human).